We begin with the raw amino-acid sequence, 577 residues long: Probable HECT-type ubiquitin ligase-interacting protein creD (577 aa).

2 disordered regions span residues 376–398 (LDPA…GTLS) and 428–566 (NLHA…EEER). 2 stretches are compositionally biased toward polar residues: residues 428–447 (NLHA…NQLE) and 460–472 (SSGS…TSPE). The segment covering 473–486 (LSRRPSDEVDHDHV) has biased composition (basic and acidic residues). Over residues 528–544 (SPQQAHVRSANRSSSYF) the composition is skewed to polar residues.

Belongs to the arrestin family. Interacts with hulA.

Functionally, component of the regulatory network controlling carbon source utilization through ubiquitination and deubiquitination involving creA, creB, creC, creD and acrB. May be involved in signaling by recognizing appropriately phosphorylated substrates via its arrestin domains and then recruit a HECT-type ubiquitin ligase such as hulA, leading to ubiquitination of the substrate, providing a link between ubiquitination and phosphorylation in protein regulation and stability. This Aspergillus terreus (strain NIH 2624 / FGSC A1156) protein is Probable HECT-type ubiquitin ligase-interacting protein creD (creD).